The chain runs to 257 residues: Thiazole synthase (257 aa).

Catalysis depends on lysine 96, which acts as the Schiff-base intermediate with DXP. 1-deoxy-D-xylulose 5-phosphate is bound by residues glycine 157, 184-185 (AG), and 206-207 (NT).

It belongs to the ThiG family. As to quaternary structure, homotetramer. Forms heterodimers with either ThiH or ThiS.

Its subcellular location is the cytoplasm. It catalyses the reaction [ThiS sulfur-carrier protein]-C-terminal-Gly-aminoethanethioate + 2-iminoacetate + 1-deoxy-D-xylulose 5-phosphate = [ThiS sulfur-carrier protein]-C-terminal Gly-Gly + 2-[(2R,5Z)-2-carboxy-4-methylthiazol-5(2H)-ylidene]ethyl phosphate + 2 H2O + H(+). The protein operates within cofactor biosynthesis; thiamine diphosphate biosynthesis. In terms of biological role, catalyzes the rearrangement of 1-deoxy-D-xylulose 5-phosphate (DXP) to produce the thiazole phosphate moiety of thiamine. Sulfur is provided by the thiocarboxylate moiety of the carrier protein ThiS. In vitro, sulfur can be provided by H(2)S. The sequence is that of Thiazole synthase from Bartonella bacilliformis (strain ATCC 35685 / KC583 / Herrer 020/F12,63).